Consider the following 132-residue polypeptide: Mediator of RNA polymerase II transcription subunit 11 (132 aa).

It belongs to the Mediator complex subunit 11 family. Component of the Mediator complex.

It localises to the nucleus. Functionally, component of the Mediator complex, a coactivator involved in the regulated transcription of nearly all RNA polymerase II-dependent genes. Mediator functions as a bridge to convey information from gene-specific regulatory proteins to the basal RNA polymerase II transcription machinery. Mediator is recruited to promoters by direct interactions with regulatory proteins and serves as a scaffold for theQ9P086 assembly of a functional pre-initiation complex with RNA polymerase II and the general transcription factors. The chain is Mediator of RNA polymerase II transcription subunit 11 (MED11) from Aedes aegypti (Yellowfever mosquito).